Reading from the N-terminus, the 336-residue chain is Protein-glutamate methylesterase/protein-glutamine glutaminase 2 (336 aa).

The Response regulatory domain maps to 2–119; that stretch reads KIAIVNDMPM…PNPKEAAAPL (118 aa). Aspartate 53 is modified (4-aspartylphosphate). One can recognise a CheB-type methylesterase domain in the interval 147-336; it reads PSRRDRLVAI…APRLIEVFTQ (190 aa). Active-site residues include serine 159, histidine 186, and aspartate 279.

Belongs to the CheB family. Phosphorylated by CheA. Phosphorylation of the N-terminal regulatory domain activates the methylesterase activity.

It is found in the cytoplasm. The catalysed reaction is [protein]-L-glutamate 5-O-methyl ester + H2O = L-glutamyl-[protein] + methanol + H(+). It catalyses the reaction L-glutaminyl-[protein] + H2O = L-glutamyl-[protein] + NH4(+). Involved in chemotaxis. Part of a chemotaxis signal transduction system that modulates chemotaxis in response to various stimuli. Catalyzes the demethylation of specific methylglutamate residues introduced into the chemoreceptors (methyl-accepting chemotaxis proteins or MCP) by CheR. Also mediates the irreversible deamidation of specific glutamine residues to glutamic acid. The sequence is that of Protein-glutamate methylesterase/protein-glutamine glutaminase 2 from Pseudomonas syringae pv. syringae (strain B728a).